The sequence spans 456 residues: Molybdate transporter 1 (456 aa).

9 helical membrane-spanning segments follow: residues 67–87 (LIFTGIYNAITGAVYGVPMPV), 110–130 (IMAAGICTGGILFVLGISGLM), 133–153 (VFNIIPLSVVRGIQLSQGLAF), 177–197 (PWLGLDGLVLALVCVLFIVLV), 225–245 (VIANVPSALLIFLLGVVLAFI), 309–329 (AASVSMTVGLMNMVGCWFGAM), 354–374 (LLGVAKLVLGLVLGGSLVGIL), 377–397 (FPVGVLGALLLFAGVELAMAA), and 417–437 (LGSNAAIGFVAGDLLYVVLWM).

Belongs to the SLC26A/SulP transporter (TC 2.A.53) family. In terms of tissue distribution, strongly expressed in roots. Detected in the vascular tissues of hypocotyls, in petioles and vascular tissues of cotyledons and leaves, in mesophyll cells, stamen, sepals and siliques.

The protein resides in the cell membrane. It localises to the endomembrane system. Its subcellular location is the mitochondrion membrane. Its activity is regulated as follows. Not inhibited by sulfate. High affinity molybdate transporter. Unable to transport sulfate. The protein is Molybdate transporter 1 (MOT1) of Arabidopsis thaliana (Mouse-ear cress).